The sequence spans 236 residues: C-&gt;U-editing enzyme APOBEC-1 (236 aa).

The CMP/dCMP-type deaminase domain maps to 10–134; sequence GDPTLRRRIE…QQNRQGLRDL (125 aa). Position 61 (His-61) interacts with Zn(2+). Glu-63 serves as the catalytic Proton donor. Residues Cys-93 and Cys-96 each coordinate Zn(2+).

Belongs to the cytidine and deoxycytidylate deaminase family. In terms of assembly, homodimer. Interacts with A1CF; form an mRNA editing complex. Interacts with RBM47; form an mRNA editing complex. Found in a complex with CELF2/CUGBP2 and A1CF. Interacts with HNRPAB. Interacts with SYNCRIP. Zn(2+) is required as a cofactor. Expressed exclusively in the small intestine.

It is found in the cytoplasm. It localises to the nucleus. The catalysed reaction is a cytidine in mRNA + H2O + H(+) = a uridine in mRNA + NH4(+). The enzyme catalyses cytidine(6666) in apoB mRNA + H2O + H(+) = uridine(6666) in apoB mRNA + NH4(+). Functionally, cytidine deaminase catalyzing the cytidine to uridine postranscriptional editing of a variety of mRNAs. Form complexes with cofactors that confer differential editing activity and selectivity. Responsible for the postranscriptional editing of a CAA codon for Gln to a UAA codon for stop in the apolipoprotein B mRNA. Also involved in CGA (Arg) to UGA (Stop) editing in the NF1 mRNA. May also play a role in the epigenetic regulation of gene expression by participating in DNA demethylation. The chain is C-&gt;U-editing enzyme APOBEC-1 from Homo sapiens (Human).